Reading from the N-terminus, the 291-residue chain is 33 kDa chaperonin (291 aa).

2 disulfides stabilise this stretch: cysteine 235–cysteine 237 and cysteine 268–cysteine 271.

Belongs to the HSP33 family. Under oxidizing conditions two disulfide bonds are formed involving the reactive cysteines. Under reducing conditions zinc is bound to the reactive cysteines and the protein is inactive.

It localises to the cytoplasm. Functionally, redox regulated molecular chaperone. Protects both thermally unfolding and oxidatively damaged proteins from irreversible aggregation. Plays an important role in the bacterial defense system toward oxidative stress. The chain is 33 kDa chaperonin from Bacillus velezensis (strain DSM 23117 / BGSC 10A6 / LMG 26770 / FZB42) (Bacillus amyloliquefaciens subsp. plantarum).